The sequence spans 513 residues: Coiled-coil domain-containing protein 102B (513 aa).

The interval 1 to 217 (MNLDSIHRLI…IDSLKLSEEM (217 aa)) is required for centriolar localization and for interaction with CEP250, CROCC, LRRC45 and NEK2. Phosphoserine is present on residues Ser21, Ser22, Ser34, Ser135, Ser142, Ser194, and Ser210. Residues 72 to 142 (ELRLRELEEV…ELSTLKKKQS (71 aa)) are a coiled coil. Coiled-coil stretches lie at residues 268–337 (QKIL…ESKS) and 363–513 (WDKR…LQNW). Ser401, Ser404, and Ser406 each carry phosphoserine. Residues 493 to 513 (LDEEKERNENLETELRHLQNW) form a disordered region.

In terms of assembly, interacts (via N-terminus) with centriolar protein CEP250/CNAP1; the interaction results in recruitment of CCDC102B to the proximal ends of centrioles. Interacts (via N-terminus) with CROCC/rootletin and LRRC45. Interacts (via N-terminus) with serine/threonine-protein kinase NEK2; the interaction results in phosphorylation of CCDC102B. Phosphorylated directly or indirectly by NEK2 during mitosis which causes dissociation of CCDC102B from the centrosome and allows for centrosome separation.

It is found in the cytoplasm. Its subcellular location is the cytoskeleton. It localises to the microtubule organizing center. The protein resides in the centrosome. The protein localises to the centriole. During interphase, forms fibers at the proximal ends of centrioles to maintain centrosome cohesion. During mitosis, dissociates from the centrosome following phosphorylation to allow centrosome separation. Contributes to CROCC/rootletin filament formation. In Homo sapiens (Human), this protein is Coiled-coil domain-containing protein 102B (CCDC102B).